Here is a 220-residue protein sequence, read N- to C-terminus: UPF0319 protein YccT (220 aa).

The signal sequence occupies residues 1–20 (MKTGALATFLALCLPVTVFA).

The protein belongs to the UPF0319 family.

This Salmonella enteritidis PT4 (strain P125109) protein is UPF0319 protein YccT.